A 134-amino-acid polypeptide reads, in one-letter code: Small ribosomal subunit protein uS8c (134 aa).

This sequence belongs to the universal ribosomal protein uS8 family. Part of the 30S ribosomal subunit.

It localises to the plastid. The protein localises to the chloroplast. Functionally, one of the primary rRNA binding proteins, it binds directly to 16S rRNA central domain where it helps coordinate assembly of the platform of the 30S subunit. The chain is Small ribosomal subunit protein uS8c (rps8) from Nicotiana tabacum (Common tobacco).